Reading from the N-terminus, the 294-residue chain is Elongation factor Ts (294 aa).

An involved in Mg(2+) ion dislocation from EF-Tu region spans residues 82 to 85 (TDFV).

Belongs to the EF-Ts family.

Its subcellular location is the cytoplasm. Functionally, associates with the EF-Tu.GDP complex and induces the exchange of GDP to GTP. It remains bound to the aminoacyl-tRNA.EF-Tu.GTP complex up to the GTP hydrolysis stage on the ribosome. The polypeptide is Elongation factor Ts (Nitrosomonas eutropha (strain DSM 101675 / C91 / Nm57)).